The primary structure comprises 123 residues: Plasminogen (123 aa).

One can recognise a Kringle domain in the interval 40-118 (DCYHGNGQSY…RWEFCNLKKC (79 aa)). Disulfide bonds link Cys41/Cys118, Cys62/Cys101, and Cys90/Cys113.

The protein belongs to the peptidase S1 family. Plasminogen subfamily. Interacts with CSPG4 and AMOT. Interacts (via the Kringle domains) with HRG; the interaction tethers PLG to the cell surface and enhances its activation. Interacts (via Kringle 4 domain) with ADA; the interaction stimulates PLG activation when in complex with DPP4. Angiostatin: Interacts with ATP5F1A; the interaction inhibits most of the angiogenic effects of angiostatin.

It is found in the secreted. It catalyses the reaction Preferential cleavage: Lys-|-Xaa &gt; Arg-|-Xaa, higher selectivity than trypsin. Converts fibrin into soluble products.. Its activity is regulated as follows. Converted into plasmin by plasminogen activators, both plasminogen and its activator being bound to fibrin. Cannot be activated with streptokinase. Plasmin dissolves the fibrin of blood clots and acts as a proteolytic factor in a variety of other processes including embryonic development, tissue remodeling, tumor invasion, and inflammation. In ovulation, weakens the walls of the Graafian follicle. It activates the urokinase-type plasminogen activator, collagenases and several complement zymogens, such as C1, C4 and C5. Cleavage of fibronectin and laminin leads to cell detachment and apoptosis. Also cleaves fibrin, thrombospondin and von Willebrand factor. Its role in tissue remodeling and tumor invasion may be modulated by CSPG4. Binds to cells. The sequence is that of Plasminogen (PLG) from Capra hircus (Goat).